Consider the following 93-residue polypeptide: Co-chaperonin GroES (93 aa).

Belongs to the GroES chaperonin family. As to quaternary structure, heptamer of 7 subunits arranged in a ring. Interacts with the chaperonin GroEL.

The protein resides in the cytoplasm. In terms of biological role, together with the chaperonin GroEL, plays an essential role in assisting protein folding. The GroEL-GroES system forms a nano-cage that allows encapsulation of the non-native substrate proteins and provides a physical environment optimized to promote and accelerate protein folding. GroES binds to the apical surface of the GroEL ring, thereby capping the opening of the GroEL channel. The chain is Co-chaperonin GroES from Streptococcus intermedius.